The following is a 249-amino-acid chain: 5'-nucleotidase SurE (249 aa).

A divalent metal cation contacts are provided by Asp8, Asp9, Ser39, and Asn91.

The protein belongs to the SurE nucleotidase family. It depends on a divalent metal cation as a cofactor.

The protein resides in the cytoplasm. It carries out the reaction a ribonucleoside 5'-phosphate + H2O = a ribonucleoside + phosphate. Nucleotidase that shows phosphatase activity on nucleoside 5'-monophosphates. The protein is 5'-nucleotidase SurE of Pseudomonas syringae pv. syringae (strain B728a).